We begin with the raw amino-acid sequence, 280 residues long: Probable endonuclease 4 (280 aa).

Zn(2+) is bound by residues His69, His109, Glu145, Asp179, His182, His216, Asp229, His231, and Glu261.

Belongs to the AP endonuclease 2 family. Requires Zn(2+) as cofactor.

The catalysed reaction is Endonucleolytic cleavage to 5'-phosphooligonucleotide end-products.. Its function is as follows. Endonuclease IV plays a role in DNA repair. It cleaves phosphodiester bonds at apurinic or apyrimidinic (AP) sites, generating a 3'-hydroxyl group and a 5'-terminal sugar phosphate. The chain is Probable endonuclease 4 from Aliarcobacter butzleri (strain RM4018) (Arcobacter butzleri).